Consider the following 154-residue polypeptide: Superoxide dismutase [Cu-Zn] (154 aa).

Cu cation contacts are provided by His-47, His-49, and His-64. An intrachain disulfide couples Cys-58 to Cys-147. Zn(2+) is bound by residues His-64, His-72, His-81, and Asp-84. His-121 lines the Cu cation pocket. Positions 125–136 are enriched in basic and acidic residues; it reads DDLGKGGNEESL. Residues 125 to 144 are disordered; the sequence is DDLGKGGNEESLKTGNAGPR. Position 144 (Arg-144) interacts with substrate.

Belongs to the Cu-Zn superoxide dismutase family. Homodimer. It depends on Cu cation as a cofactor. Requires Zn(2+) as cofactor.

Its subcellular location is the cytoplasm. The enzyme catalyses 2 superoxide + 2 H(+) = H2O2 + O2. Destroys radicals which are normally produced within the cells and which are toxic to biological systems. The sequence is that of Superoxide dismutase [Cu-Zn] (sod-1) from Neurospora crassa (strain ATCC 24698 / 74-OR23-1A / CBS 708.71 / DSM 1257 / FGSC 987).